The chain runs to 279 residues: Phosphatidylglycerol--prolipoprotein diacylglyceryl transferase (279 aa).

3 consecutive transmembrane segments (helical) span residues 18-38 (LSVR…YFVA), 55-75 (IIFY…VIFQ), and 89-109 (IWHG…AGVI). Arg137 serves as a coordination point for a 1,2-diacyl-sn-glycero-3-phospho-(1'-sn-glycerol). Transmembrane regions (helical) follow at residues 203–223 (LGET…FIEG) and 235–255 (IRVA…LIVY).

Belongs to the Lgt family.

The protein resides in the cell membrane. The enzyme catalyses L-cysteinyl-[prolipoprotein] + a 1,2-diacyl-sn-glycero-3-phospho-(1'-sn-glycerol) = an S-1,2-diacyl-sn-glyceryl-L-cysteinyl-[prolipoprotein] + sn-glycerol 1-phosphate + H(+). Its pathway is protein modification; lipoprotein biosynthesis (diacylglyceryl transfer). Catalyzes the transfer of the diacylglyceryl group from phosphatidylglycerol to the sulfhydryl group of the N-terminal cysteine of a prolipoprotein, the first step in the formation of mature lipoproteins. This chain is Phosphatidylglycerol--prolipoprotein diacylglyceryl transferase, found in Staphylococcus aureus (strain MSSA476).